We begin with the raw amino-acid sequence, 197 residues long: Glycerol-3-phosphate acyltransferase (197 aa).

Helical transmembrane passes span 6-26 (LFIVLLLLSYLIGSISTAIIV), 58-78 (AITLIGDGLKGAIPVLIAHYL), 82-102 (MLNVTWVILVTFLGHVYPIFF), 116-136 (ALLALSYLTGLSFIITWVFVA), and 157-177 (FYLITNNLASTYVIILICLWI).

The protein belongs to the PlsY family. As to quaternary structure, probably interacts with PlsX.

The protein localises to the cell inner membrane. It catalyses the reaction an acyl phosphate + sn-glycerol 3-phosphate = a 1-acyl-sn-glycero-3-phosphate + phosphate. The protein operates within lipid metabolism; phospholipid metabolism. Its function is as follows. Catalyzes the transfer of an acyl group from acyl-phosphate (acyl-PO(4)) to glycerol-3-phosphate (G3P) to form lysophosphatidic acid (LPA). This enzyme utilizes acyl-phosphate as fatty acyl donor, but not acyl-CoA or acyl-ACP. The polypeptide is Glycerol-3-phosphate acyltransferase (Ruthia magnifica subsp. Calyptogena magnifica).